A 530-amino-acid chain; its full sequence is MKENDMNNGVDKWVNEEDGRNDHHNNNNNLMKKAMMNNEQIDRTQDIDNAKEMLRKISSESSSRRSSLLNKDSSLVNGNANSGGGTSINGTRGSSKSSNTHFQYASTAYGVRMLSKDISNTKVELDVENLMIVTKLNDVSLYFLTRELVEWVLVHFPRVTVYVDSELKNSKKFAAGELCEDSKCRESRIKYWTKDFIREHDVFFDLVVTLGGDGTVLFVSSIFQRHVPPVMSFSLGSLGFLTNFKFEHFREDLPRIMNHKIKTNLRLRLECTIYRRHRPEVDPNTGKKICVVEKLSTHHILNEVTIDRGPSPFLSMLELYGDGSLMTVAQADGLIAATPTGSTAYSLSAGGSLVCPTVNAIALTPICPHALSFRPIILPESINLKVKVSMKSRAPAWAAFDGKDRIELQKGDFITICASPYAFPTVEASPDEFINSISRQLNWNVREQQKSFTHILSQKNQEKYAHEANKVRNQAEPLEVIRDKYSLEADATKENNNGSDDESDDESVNCEACKLKPSSVPKPSQARFSV.

Disordered stretches follow at residues 1–27 (MKEN…HNNN), 57–99 (ISSE…KSSN), and 486–530 (SLEA…RFSV). Positions 13–25 (WVNEEDGRNDHHN) are enriched in basic and acidic residues. The span at 59–75 (SESSSRRSSLLNKDSSL) shows a compositional bias: low complexity. A compositionally biased stretch (polar residues) spans 88-99 (INGTRGSSKSSN). S499 and S503 each carry phosphoserine. Residues 499 to 508 (SDDESDDESV) show a composition bias toward acidic residues.

This sequence belongs to the NAD kinase family. Homohexamer.

The catalysed reaction is NAD(+) + ATP = ADP + NADP(+) + H(+). Specifically phosphorylates NAD in the presence of ATP, dATP, or CTP as phosphoryl donors. The chain is NAD(+) kinase (UTR1) from Saccharomyces cerevisiae (strain ATCC 204508 / S288c) (Baker's yeast).